Consider the following 816-residue polypeptide: Mechanosensitive cation channel TMEM63B (816 aa).

Over 1–46 (MLPYVIATLGSAGSTCKASTCSNSTKDYCYSARIRSTVLQGLPFGG) the chain is Extracellular. A helical transmembrane segment spans residues 47-71 (VPTVLALDFMCFLALLFVFSILRKV). 2 S-palmitoyl cysteine lipidation sites follow: Cys-57 and Cys-119. The Cytoplasmic segment spans residues 72-138 (AWDYGRLALV…KDDEIRDKCG (67 aa)). The chain crosses the membrane as a helical span at residues 139–171 (GDAVHYLSFQRHIIGLLVAVGVLSVGIVLPVNF). At 172–195 (SGDLLENNAYSFGRTTIANLNSGN) the chain is on the extracellular side. The chain crosses the membrane as a helical span at residues 196–220 (NLLWLHTSFAFLYLLLTVYSMRRHT). Residues 221–420 (SKMRYKEDDL…IYWEHLSIRG (200 aa)) lie on the Cytoplasmic side of the membrane. The intracellular linker IL2; confers mechanosensitivity stretch occupies residues 224–419 (RYKEDDLVKR…NIYWEHLSIR (196 aa)). Residues Cys-375 and Cys-391 are each lipidated (S-palmitoyl cysteine). Residues 421–450 (FIWWIRCLVINVVLFILLFFLTTPAIIITT) form a helical membrane-spanning segment. Topologically, residues 451–465 (MDKFNVTKPVEYLNN) are extracellular. A helical membrane pass occupies residues 466-495 (PIITQFFPTLLLWCFSALLPTIVYYSAFFE). The Cytoplasmic portion of the chain corresponds to 496–499 (AHWT). Residues 500-536 (RSGENRTTMHKCYTFLIFMVLLLPSLGLSSLDVFFRW) form a helical membrane-spanning segment. Residues 537–559 (LFDKKFLAEAAVRFECVFLPDNG) lie on the Extracellular side of the membrane. Residues 560–592 (AFFVNYVIASAFIGNAMDLLRIPGLLMYMIRLC) form a helical membrane-spanning segment. Positions 560–592 (AFFVNYVIASAFIGNAMDLLRIPGLLMYMIRLC) are gating helix. At 593–612 (LARSAAERRNVKRHQAYEFQ) the chain is on the cytoplasmic side. Residues 613 to 631 (FGAAYAWMMCVFTVVMTYS) form a helical membrane-spanning segment. Topologically, residues 632-634 (ITC) are extracellular. A helical transmembrane segment spans residues 635 to 659 (PIIVPFGLMYMLLKHLVDRYNLYYA). Residues 660–666 (YLPAKLD) lie on the Cytoplasmic side of the membrane. The helical transmembrane segment at 667–695 (KKIHSGAVNQVVAAPILCLFWLLFFSTMR) threads the bilayer. Residues 696–700 (TGFLA) lie on the Extracellular side of the membrane. Residues 701 to 721 (PTSMFTFVVLVITIVICLCHV) form a helical membrane-spanning segment. S-palmitoyl cysteine attachment occurs at residues Cys-719 and Cys-722. Topologically, residues 722 to 816 (CFGHFKYLSA…DSLIENEIRQ (95 aa)) are cytoplasmic.

This sequence belongs to the CSC1 (TC 1.A.17) family. In terms of assembly, monomer. Post-translationally, palmitoylation is required for localization to the plasma membrane and stability.

The protein resides in the cell membrane. It localises to the lysosome membrane. It is found in the early endosome membrane. It catalyses the reaction Ca(2+)(in) = Ca(2+)(out). The catalysed reaction is Mg(2+)(in) = Mg(2+)(out). The enzyme catalyses K(+)(in) = K(+)(out). It carries out the reaction Na(+)(in) = Na(+)(out). It catalyses the reaction Cs(+)(in) = Cs(+)(out). In terms of biological role, mechanosensitive cation channel with low conductance and high activation threshold. Osmosensitive cation channel preferentially activated by hypotonic stress. Also acts as a phospholipid scramblase in response to changes in membrane structure: upon changes in membrane curvature and thickness, alters its conformation and translocates phospholipids, thereby controlling plasma membrane lipid distribution. This chain is Mechanosensitive cation channel TMEM63B, found in Gallus gallus (Chicken).